A 342-amino-acid polypeptide reads, in one-letter code: Probable dual-specificity RNA methyltransferase RlmN (342 aa).

The Proton acceptor role is filled by Glu-91. The region spanning 97–327 (YKHGNSICVS…TTIRREMGAD (231 aa)) is the Radical SAM core domain. A disulfide bond links Cys-104 and Cys-332. [4Fe-4S] cluster-binding residues include Cys-111, Cys-115, and Cys-118. S-adenosyl-L-methionine contacts are provided by residues 158–159 (GE), Ser-190, 213–215 (SLH), and Asn-289. Cys-332 acts as the S-methylcysteine intermediate in catalysis.

The protein belongs to the radical SAM superfamily. RlmN family. Requires [4Fe-4S] cluster as cofactor.

It localises to the cytoplasm. It carries out the reaction adenosine(2503) in 23S rRNA + 2 reduced [2Fe-2S]-[ferredoxin] + 2 S-adenosyl-L-methionine = 2-methyladenosine(2503) in 23S rRNA + 5'-deoxyadenosine + L-methionine + 2 oxidized [2Fe-2S]-[ferredoxin] + S-adenosyl-L-homocysteine. It catalyses the reaction adenosine(37) in tRNA + 2 reduced [2Fe-2S]-[ferredoxin] + 2 S-adenosyl-L-methionine = 2-methyladenosine(37) in tRNA + 5'-deoxyadenosine + L-methionine + 2 oxidized [2Fe-2S]-[ferredoxin] + S-adenosyl-L-homocysteine. Its function is as follows. Specifically methylates position 2 of adenine 2503 in 23S rRNA and position 2 of adenine 37 in tRNAs. The sequence is that of Probable dual-specificity RNA methyltransferase RlmN from Clostridium botulinum (strain Langeland / NCTC 10281 / Type F).